Reading from the N-terminus, the 393-residue chain is CCCH-type zinc finger protein oma-2 (393 aa).

The disordered stretch occupies residues 1–26 (MDMLKENVIQNNEARTESSVEPSHPD). A compositionally biased stretch (basic and acidic residues) spans 14–26 (ARTESSVEPSHPD). C3H1-type zinc fingers lie at residues 105–133 (SYKTVICQAWLESKTCAFAENCRFAHGEE) and 147–175 (KYRTKLCDKYTTTGLCPYGKRCLFIHPDN). Disordered regions lie at residues 227-251 (TPDEPAANMPLGPTPVSIRGPRYEL) and 311-340 (KQSTPGGVSGYSSSGSTPSQDSDSSPLTAA). Residues 313–340 (STPGGVSGYSSSGSTPSQDSDSSPLTAA) show a composition bias toward low complexity. The residue at position 327 (T327) is a Phosphothreonine; by GSK3.

As to expression, exclusively expressed in the hermaphrodite gonad. Expression only in cellulized oocytes. Widely distributed throughout gonadal oocytes from the mitotic stage to the developing diakinesis stage.

It is found in the cytoplasm. Its subcellular location is the cytoplasmic granule. The protein resides in the cytoskeleton. It localises to the microtubule organizing center. The protein localises to the centrosome. Zinc-finger RNA-binding protein that binds to 5'-UA[AU]-3' motifs in the 3'-UTR of maternal mRNAs to suppress translation in oocytes and embryos. Acts redundantly with oma-1 to control the temporal expression and distribution of maternal proteins and thereby promote meiotic progression, oocyte maturation, fertilization and embryonic development. Also, together with oma-1, is involved in P-granule distribution during embryonic development. The chain is CCCH-type zinc finger protein oma-2 from Caenorhabditis elegans.